The chain runs to 266 residues: Protein-ADP-ribose hydrolase (266 aa).

Positions 74-265 (TDLKDLKPIK…LYKEALNRDA (192 aa)) constitute a Macro domain. ADP-D-ribose is bound by residues D93, I94, and N107. Residues C113, H118, and C120 each contribute to the Zn(2+) site. ADP-D-ribose contacts are provided by C120, I121, D122, S212, T213, G214, and F216.

Belongs to the MacroD-type family. Zn-Macro subfamily. In terms of assembly, monomer. Directly interacts with the lipoylated form of GcvH-L. It depends on Zn(2+) as a cofactor.

The enzyme catalyses 4-O-(ADP-D-ribosyl)-L-aspartyl-[protein] + H2O = L-aspartyl-[protein] + ADP-D-ribose + H(+). Its function is as follows. ADP-ribosylhydrolase that specifically reverses the SirTM-mediated mono-ADP-ribosylation at an asparatate residue of GcvH-L (SAV0324), by releasing ADP-ribose from the target protein. May play a role in the regulation of the response to host-induced oxidative stress. The polypeptide is Protein-ADP-ribose hydrolase (Staphylococcus aureus (strain Mu50 / ATCC 700699)).